Here is a 314-residue protein sequence, read N- to C-terminus: Ornithine carbamoyltransferase (314 aa).

Residues 58-61 (STRT), glutamine 85, arginine 109, and 136-139 (HPAQ) each bind carbamoyl phosphate. L-ornithine is bound by residues asparagine 169, aspartate 233, and 237–238 (SM). Carbamoyl phosphate-binding positions include 273–274 (CL) and arginine 301.

Belongs to the aspartate/ornithine carbamoyltransferase superfamily. OTCase family.

Its subcellular location is the cytoplasm. It carries out the reaction carbamoyl phosphate + L-ornithine = L-citrulline + phosphate + H(+). It participates in amino-acid degradation; L-arginine degradation via ADI pathway; carbamoyl phosphate from L-arginine: step 2/2. In terms of biological role, reversibly catalyzes the transfer of the carbamoyl group from carbamoyl phosphate (CP) to the N(epsilon) atom of ornithine (ORN) to produce L-citrulline. The polypeptide is Ornithine carbamoyltransferase (Staphylothermus marinus (strain ATCC 43588 / DSM 3639 / JCM 9404 / F1)).